Reading from the N-terminus, the 527-residue chain is Probable bifunctional methylthioribulose-1-phosphate dehydratase/enolase-phosphatase E1 (527 aa).

Residues 1–244 form a methylthioribulose-1-phosphate dehydratase region; sequence MAAAAAPAVA…AIKLHQLGLD (244 aa). Cysteine 116 contributes to the substrate binding site. Zn(2+) is bound by residues histidine 134 and histidine 136. The active-site Proton donor/acceptor; for methylthioribulose-1-phosphate dehydratase activity is glutamate 159. Histidine 209 serves as a coordination point for Zn(2+). The segment at 288–527 is enolase-phosphatase E1; the sequence is IVLDIEGTTT…FKTINSLSEI (240 aa). Mg(2+) is bound by residues aspartate 291 and glutamate 293. Substrate-binding positions include 426 to 427 and lysine 460; that span reads SS. Position 486 (aspartate 486) interacts with Mg(2+).

This sequence in the N-terminal section; belongs to the aldolase class II family. MtnB subfamily. The protein in the C-terminal section; belongs to the HAD-like hydrolase superfamily. MasA/MtnC family. The cofactor is Zn(2+). Requires Mg(2+) as cofactor.

The enzyme catalyses 5-(methylsulfanyl)-D-ribulose 1-phosphate = 5-methylsulfanyl-2,3-dioxopentyl phosphate + H2O. It catalyses the reaction 5-methylsulfanyl-2,3-dioxopentyl phosphate + H2O = 1,2-dihydroxy-5-(methylsulfanyl)pent-1-en-3-one + phosphate. It functions in the pathway amino-acid biosynthesis; L-methionine biosynthesis via salvage pathway; L-methionine from S-methyl-5-thio-alpha-D-ribose 1-phosphate: step 2/6. It participates in amino-acid biosynthesis; L-methionine biosynthesis via salvage pathway; L-methionine from S-methyl-5-thio-alpha-D-ribose 1-phosphate: step 3/6. The protein operates within amino-acid biosynthesis; L-methionine biosynthesis via salvage pathway; L-methionine from S-methyl-5-thio-alpha-D-ribose 1-phosphate: step 4/6. The sequence is that of Probable bifunctional methylthioribulose-1-phosphate dehydratase/enolase-phosphatase E1 from Ricinus communis (Castor bean).